We begin with the raw amino-acid sequence, 126 residues long: Desulfoferrodoxin (126 aa).

Fe cation-binding residues include cysteine 10, cysteine 13, cysteine 29, cysteine 30, histidine 49, histidine 69, histidine 75, cysteine 116, and histidine 119.

The protein belongs to the desulfoferrodoxin family. In terms of assembly, homodimer. It depends on Fe(3+) as a cofactor. The cofactor is Cu(2+).

It catalyses the reaction reduced [rubredoxin] + superoxide + 2 H(+) = oxidized [rubredoxin] + H2O2. Functionally, catalyzes the one-electron reduction of superoxide anion radical to hydrogen peroxide at a nonheme ferrous iron center. Plays a fundamental role in case of oxidative stress via its superoxide detoxification activity. This chain is Desulfoferrodoxin (dfx), found in Syntrophotalea carbinolica (strain DSM 2380 / NBRC 103641 / GraBd1) (Pelobacter carbinolicus).